We begin with the raw amino-acid sequence, 529 residues long: Corneodesmosin (529 aa).

The N-terminal stretch at 1–32 is a signal peptide; the sequence is MGSSRAPWMGRVGGHGMMALLLAGLLLPGTLA. Disordered regions lie at residues 38-248 and 383-492; these read FSDP…SVSG and GSTG…SSAG. Composition is skewed to low complexity over residues 58–83, 90–100, 111–175, 189–231, 392–408, and 426–441; these read GKGD…SARS, GSSSGSSIAQG, GYSQ…NGSA, PSQP…SGGP, SPSS…SSSS, and PGTG…QSSG. Asn172 carries an N-linked (GlcNAc...) asparagine glycan. Residues 449-467 show a composition bias toward polar residues; it reads GSKSSSSGHPCMSVSSLTL.

The protein resides in the secreted. Functionally, important for the epidermal barrier integrity. This is Corneodesmosin (CDSN) from Pan troglodytes (Chimpanzee).